Consider the following 371-residue polypeptide: Carlactonoate CLA methyltransferase (371 aa).

Residue Y21 coordinates S-adenosyl-L-homocysteine. Q28 lines the (11R)-carlactonoate pocket. S-adenosyl-L-homocysteine-binding residues include C62, N67, D101, L102, S141, and F142. Residues H162 and W163 each coordinate (11R)-carlactonoate. The Mg(2+) site is built by N180, D266, Y268, and D269.

This sequence belongs to the methyltransferase superfamily. Type-7 methyltransferase family. SABATH subfamily. In terms of assembly, homodimer. It depends on Mg(2+) as a cofactor.

It catalyses the reaction (11R)-carlactonoate + S-adenosyl-L-methionine = (11R)-methyl carlactonoate + S-adenosyl-L-homocysteine. Functionally, methyltransferase involved in the biosynthesis of strigolactone natural products, bioactive compounds promoting plant fitness and soil microbe interactions, but preventing shoot branching. Catalyzes the biosynthesis of (11R)-methyl carlactonoate (MeCLA) from (11R)-carlactonoate (CLA), downstream of MAX1; MeCLA is probably biologically active as a hormone regulating shoot branching and serves as a precursor of non-canonical strigolactones (SLs). The sequence is that of Carlactonoate CLA methyltransferase from Arabidopsis thaliana (Mouse-ear cress).